Reading from the N-terminus, the 419-residue chain is Putative zinc metalloprotease spyM18_2031 (419 aa).

Position 18 (His-18) interacts with Zn(2+). Glu-19 is an active-site residue. Position 22 (His-22) interacts with Zn(2+). Transmembrane regions (helical) follow at residues 169–191, 301–323, 343–365, and 392–411; these read LITN…ILLV, LAWS…FSLN, LESV…LIPI, and AYIT…AVTW. The 100-residue stretch at 175-274 folds into the PDZ domain; it reads GPMNNFILGI…LKTVAVKPQK (100 aa).

It belongs to the peptidase M50B family. Requires Zn(2+) as cofactor.

The protein resides in the cell membrane. This chain is Putative zinc metalloprotease spyM18_2031, found in Streptococcus pyogenes serotype M18 (strain MGAS8232).